The primary structure comprises 406 residues: Mitochondrial potassium channel (406 aa).

A mitochondrion-targeting transit peptide spans M1 to T35. Residues L36–K198 are Mitochondrial matrix-facing. A coiled-coil region spans residues V113–E140. Residues N199–V219 form a helical membrane-spanning segment. The Mitochondrial intermembrane portion of the chain corresponds to N220–V382. A helical membrane pass occupies residues S383–F403. Over K404 to S406 the chain is Mitochondrial matrix.

In terms of assembly, the mitochondrial potassium channel (mitoK(ATP)) is composed of 4 subunits of CCDC51/MITOK and 4 subunits of ABCB8/MITOSUR.

It is found in the mitochondrion inner membrane. The enzyme catalyses K(+)(in) = K(+)(out). Its activity is regulated as follows. Inhibited by ATP via mitoK(ATP) channel. Its function is as follows. Pore-forming subunit of the mitochondrial ATP-gated potassium channel (mitoK(ATP)). Together with ATP-binding subunit ABCB8/MITOSUR of the mitoK(ATP) channel, mediates ATP-dependent K(+) currents across the mitochondrial inner membrane. An increase in ATP intracellular levels closes the channel, inhibiting K(+) transport, whereas a decrease in ATP levels enhances K(+) uptake in the mitochondrial matrix. May contribute to the homeostatic control of cellular metabolism under stress conditions by regulating the mitochondrial matrix volume. The polypeptide is Mitochondrial potassium channel (Mus musculus (Mouse)).